A 419-amino-acid chain; its full sequence is L-rhamnose isomerase (419 aa).

Mn(2+) contacts are provided by His-262, Asp-294, and Asp-296.

The protein belongs to the rhamnose isomerase family. As to quaternary structure, homotetramer. It depends on Mn(2+) as a cofactor.

It localises to the cytoplasm. The catalysed reaction is L-rhamnopyranose = L-rhamnulose. The protein operates within carbohydrate degradation; L-rhamnose degradation; glycerone phosphate from L-rhamnose: step 1/3. Catalyzes the interconversion of L-rhamnose and L-rhamnulose. The chain is L-rhamnose isomerase from Escherichia coli (strain 55989 / EAEC).